The chain runs to 491 residues: Trehalose-6-phosphate synthase (491 aa).

Arginine 22 contacts D-glucose 6-phosphate. 42 to 43 is a binding site for UDP-alpha-D-glucose; it reads GG. D-glucose 6-phosphate contacts are provided by tyrosine 100 and aspartate 154. The UDP-alpha-D-glucose site is built by arginine 296 and lysine 301. Arginine 334 is a binding site for D-glucose 6-phosphate. 399–403 contacts UDP-alpha-D-glucose; sequence LVAKE.

Belongs to the glycosyltransferase 20 family. As to quaternary structure, homotetramer.

It catalyses the reaction ADP-alpha-D-glucose + D-glucose 6-phosphate = alpha,alpha-trehalose 6-phosphate + ADP + H(+). The enzyme catalyses CDP-alpha-D-glucose + D-glucose 6-phosphate = alpha,alpha-trehalose 6-phosphate + CDP + H(+). It carries out the reaction GDP-alpha-D-glucose + D-glucose 6-phosphate = alpha,alpha-trehalose 6-phosphate + GDP + H(+). The catalysed reaction is TDP-alpha-D-glucose + D-glucose 6-phosphate = 5-methyl-UDP + alpha,alpha-trehalose 6-phosphate + H(+). It catalyses the reaction D-glucose 6-phosphate + UDP-alpha-D-glucose = alpha,alpha-trehalose 6-phosphate + UDP + H(+). The protein operates within glycan biosynthesis; trehalose biosynthesis. Functionally, probably involved in the osmoprotection via the biosynthesis of trehalose and in the production of glycogen and alpha-glucan via the TreS-Pep2 branch involved in the biosynthesis of maltose-1-phosphate (M1P). Catalyzes the transfer of glucose from UDP-glucose (UDP-Glc) to D-glucose 6-phosphate (Glc-6-P) to form trehalose-6-phosphate. Probably also able to use ADP-Glc, CDP-Glc, GDP-Glc and TDP-Glc as glucosyl donors. This chain is Trehalose-6-phosphate synthase, found in Mycolicibacterium vanbaalenii (strain DSM 7251 / JCM 13017 / BCRC 16820 / KCTC 9966 / NRRL B-24157 / PYR-1) (Mycobacterium vanbaalenii).